The primary structure comprises 91 residues: uncharacterized protein (91 aa).

Belongs to the UPF0440 family.

This is an uncharacterized protein from Methanothermobacter thermautotrophicus (strain ATCC 29096 / DSM 1053 / JCM 10044 / NBRC 100330 / Delta H) (Methanobacterium thermoautotrophicum).